Here is a 129-residue protein sequence, read N- to C-terminus: MLHLHILSWVLAIILFIATYLNISKNQGGTPYFKPLHMVLRLFMLLMLISGFWILIQSFMNGGANHMLLTLKMLCGVAVVGLMEVSIAKRKRHEQSHTMFWITIALIIITMVLGVILPLGPLSKLFGIG.

4 helical membrane-spanning segments follow: residues methionine 1–leucine 21, leucine 36–isoleucine 56, methionine 67–isoleucine 87, and methionine 99–leucine 119.

This sequence belongs to the UPF0344 family.

Its subcellular location is the cell membrane. The chain is UPF0344 protein SAB0838 from Staphylococcus aureus (strain bovine RF122 / ET3-1).